We begin with the raw amino-acid sequence, 234 residues long: Large ribosomal subunit protein uL1 (234 aa).

The protein belongs to the universal ribosomal protein uL1 family. Part of the 50S ribosomal subunit.

In terms of biological role, binds directly to 23S rRNA. The L1 stalk is quite mobile in the ribosome, and is involved in E site tRNA release. Functionally, protein L1 is also a translational repressor protein, it controls the translation of the L11 operon by binding to its mRNA. This Sulfurovum sp. (strain NBC37-1) protein is Large ribosomal subunit protein uL1.